Here is a 465-residue protein sequence, read N- to C-terminus: MKRLKNELNALVNRGVDRHLRLAVTGLSRSGKTAFITAMVNQLLNIHAGARLPLLSAVREERLLGVKRIPQRDFGIPRFTYDEGLAQLYGDPPAWPTPTRGVSEIRLALRFKSNDSLLRHFKDTSTLYLEIVDYPGEWLLDLPMLAQDYLSWSRQMTGLLNGQRGEWSAKWRMMSEGLDPLAPADENRLADIAAAWTDYLHHCKEQGLHFIQPGRFVLPGDMAGAPALQFFPWPDVDTWGESKLAQADKHTNAGMLRERFNYYCEKVVKGFYKNHFLRFDRQIVLVDCLQPLNSGPQAFNDMRLALTQLMQSFHYGQRTLFRRLFSPVIDKLLFAATKADHVTIDQHANMVSLLQQLIQDAWQNAAFEGISMDCLGLASVQATTSGIIDVNGEKIPALRGNRLSDGAPLTVYPGEVPARLPGQAFWDKQGFQFEAFRPQVMDVDKPLPHIRLDAALEFLIGDKLR.

The short motif at 26–33 (GLSRSGKT) is the Walker A motif element. GTP contacts are provided by Ser-28, Gly-31, Lys-32, Thr-33, Ala-34, Trp-95, Thr-99, and Arg-100. The GDP site is built by Gly-31, Lys-32, Thr-33, Ala-34, Trp-95, and Thr-99. Lys-249 is subject to N6-acetyllysine. Residues Lys-338, Asp-340, His-341, and Val-380 each contribute to the GTP site. GDP is bound by residues Lys-338, Asp-340, His-341, and Val-380.

This sequence to H.influenzae HI_1637. In terms of assembly, monomer in solution. It depends on Mg(2+) as a cofactor.

The catalysed reaction is GTP + H2O = GDP + phosphate + H(+). Its activity is regulated as follows. Alternates between an inactive form bound to GDP and an active form bound to GTP. Likely activated by a guanine nucleotide-exchange factor (GEF). Its function is as follows. Binds GTP and GDP. Has intrinsic GTPase activity. Does not hydrolyze ATP. May act as a transducer of stress responses. The chain is Ras-like GTPase YcjX (ycjX) from Escherichia coli (strain K12).